Here is a 1062-residue protein sequence, read N- to C-terminus: Isoleucine--tRNA ligase (1062 aa).

The 'HIGH' region motif lies at 47-57 (PYTTGHIHLGT). The 'KMSKS' region signature appears at 591–595 (KMSKS). Position 594 (K594) interacts with ATP.

It belongs to the class-I aminoacyl-tRNA synthetase family. IleS type 2 subfamily. In terms of assembly, monomer. Zn(2+) is required as a cofactor.

The protein localises to the cytoplasm. It carries out the reaction tRNA(Ile) + L-isoleucine + ATP = L-isoleucyl-tRNA(Ile) + AMP + diphosphate. Functionally, catalyzes the attachment of isoleucine to tRNA(Ile). As IleRS can inadvertently accommodate and process structurally similar amino acids such as valine, to avoid such errors it has two additional distinct tRNA(Ile)-dependent editing activities. One activity is designated as 'pretransfer' editing and involves the hydrolysis of activated Val-AMP. The other activity is designated 'posttransfer' editing and involves deacylation of mischarged Val-tRNA(Ile). The polypeptide is Isoleucine--tRNA ligase (Methanospirillum hungatei JF-1 (strain ATCC 27890 / DSM 864 / NBRC 100397 / JF-1)).